A 364-amino-acid chain; its full sequence is Anthranilate phosphoribosyltransferase (364 aa).

5-phospho-alpha-D-ribose 1-diphosphate-binding positions include G101, 104–105, T109, 111–114, 129–137, and G141; these read GD, NLST, and KHGNRAASS. Residue G101 coordinates anthranilate. Residue S113 participates in Mg(2+) binding. N132 lines the anthranilate pocket. R187 provides a ligand contact to anthranilate. Mg(2+)-binding residues include D245 and E246.

The protein belongs to the anthranilate phosphoribosyltransferase family. As to quaternary structure, homodimer. Mg(2+) is required as a cofactor.

It catalyses the reaction N-(5-phospho-beta-D-ribosyl)anthranilate + diphosphate = 5-phospho-alpha-D-ribose 1-diphosphate + anthranilate. The protein operates within amino-acid biosynthesis; L-tryptophan biosynthesis; L-tryptophan from chorismate: step 2/5. Functionally, catalyzes the transfer of the phosphoribosyl group of 5-phosphorylribose-1-pyrophosphate (PRPP) to anthranilate to yield N-(5'-phosphoribosyl)-anthranilate (PRA). This is Anthranilate phosphoribosyltransferase from Mycolicibacterium vanbaalenii (strain DSM 7251 / JCM 13017 / BCRC 16820 / KCTC 9966 / NRRL B-24157 / PYR-1) (Mycobacterium vanbaalenii).